The chain runs to 90 residues: Potassium channel toxin BmTXK-beta (90 aa).

The signal sequence occupies residues 1 to 22; that stretch reads MMKQQFFLFLAVIVMISSVIEA. Residues 23-29 constitute a propeptide that is removed on maturation; the sequence is GRGKEIM. The region spanning 55–90 is the BetaSPN-type CS-alpha/beta domain; that stretch reads EYACPVIEKWCEDHCAAKKAIGKCEDTECKCLKLRK. 3 disulfides stabilise this stretch: C58–C78, C65–C83, and C69–C85.

This sequence belongs to the long chain scorpion toxin family. Class 2 subfamily. As to expression, expressed by the venom gland.

Its subcellular location is the secreted. Its function is as follows. This recombinant peptide reversibly and dose-dependently inhibits the transient outward potassium current (I(To)) of rabbit atrial myocyte and prolongs the action potential duration of rabbit atrial myocyte without affecting the action potential amplitude. Thus, the voltage-gated potassium channels Kv4.1/KCND1, Kv4.2/KCND2, Kv4.3/KCND3 may be the target of this toxin. In Olivierus martensii (Manchurian scorpion), this protein is Potassium channel toxin BmTXK-beta.